Here is a 403-residue protein sequence, read N- to C-terminus: Multifunctional CCA protein (403 aa).

ATP-binding residues include G8 and R11. Residues G8 and R11 each contribute to the CTP site. The Mg(2+) site is built by D21 and D23. Positions 91, 137, and 140 each coordinate ATP. CTP contacts are provided by R91, R137, and R140. An HD domain is found at 228–329 (TGIHTLMVAK…LKVLGLLDVW (102 aa)).

The protein belongs to the tRNA nucleotidyltransferase/poly(A) polymerase family. Bacterial CCA-adding enzyme type 1 subfamily. In terms of assembly, monomer. Can also form homodimers and oligomers. It depends on Mg(2+) as a cofactor. Ni(2+) serves as cofactor.

It catalyses the reaction a tRNA precursor + 2 CTP + ATP = a tRNA with a 3' CCA end + 3 diphosphate. It carries out the reaction a tRNA with a 3' CCA end + 2 CTP + ATP = a tRNA with a 3' CCACCA end + 3 diphosphate. Its function is as follows. Catalyzes the addition and repair of the essential 3'-terminal CCA sequence in tRNAs without using a nucleic acid template. Adds these three nucleotides in the order of C, C, and A to the tRNA nucleotide-73, using CTP and ATP as substrates and producing inorganic pyrophosphate. tRNA 3'-terminal CCA addition is required both for tRNA processing and repair. Also involved in tRNA surveillance by mediating tandem CCA addition to generate a CCACCA at the 3' terminus of unstable tRNAs. While stable tRNAs receive only 3'-terminal CCA, unstable tRNAs are marked with CCACCA and rapidly degraded. In Vibrio cholerae serotype O1 (strain ATCC 39541 / Classical Ogawa 395 / O395), this protein is Multifunctional CCA protein.